Consider the following 100-residue polypeptide: Large ribosomal subunit protein uL23 (100 aa).

This sequence belongs to the universal ribosomal protein uL23 family. Part of the 50S ribosomal subunit. Contacts protein L29, and trigger factor when it is bound to the ribosome.

Functionally, one of the early assembly proteins it binds 23S rRNA. One of the proteins that surrounds the polypeptide exit tunnel on the outside of the ribosome. Forms the main docking site for trigger factor binding to the ribosome. The chain is Large ribosomal subunit protein uL23 from Idiomarina loihiensis (strain ATCC BAA-735 / DSM 15497 / L2-TR).